We begin with the raw amino-acid sequence, 258 residues long: Protein STAY-GREEN LIKE, chloroplastic (258 aa).

It belongs to the staygreen family. In terms of tissue distribution, strongly expressed in leaves, stems and panicles, and at lower levels in roots and seeds.

In terms of biological role, promotes chlorophyll degradation in leaves. May be involved in LHCI proteins degradation, regulating the balance between LHCI and LHCII. The polypeptide is Protein STAY-GREEN LIKE, chloroplastic (Oryza sativa subsp. japonica (Rice)).